We begin with the raw amino-acid sequence, 484 residues long: Ectonucleoside triphosphate diphosphohydrolase 6 (484 aa).

The Cytoplasmic segment spans residues Met1–Arg39. Residues Val40–Ile60 form a helical; Signal-anchor for type II membrane protein membrane-spanning segment. Residues Lys61–Ser484 are Lumenal-facing. A glycan (N-linked (GlcNAc...) asparagine) is linked at Asn220. Glu224 (proton acceptor) is an active-site residue. Asn284 is a glycosylation site (N-linked (GlcNAc...) asparagine). 2 disulfides stabilise this stretch: Cys325–Cys356 and Cys416–Cys430.

Belongs to the GDA1/CD39 NTPase family. In terms of assembly, monomer. Ca(2+) serves as cofactor. The cofactor is Mg(2+). In terms of processing, the secreted form may be produced by intracellular processing. Post-translationally, N-glycosylated. Expressed in most tissues, but predominantly in heart.

It localises to the golgi apparatus membrane. It is found in the secreted. The protein resides in the cell membrane. The catalysed reaction is a ribonucleoside 5'-diphosphate + H2O = a ribonucleoside 5'-phosphate + phosphate + H(+). It catalyses the reaction IDP + H2O = IMP + phosphate + H(+). The enzyme catalyses GDP + H2O = GMP + phosphate + H(+). It carries out the reaction UDP + H2O = UMP + phosphate + H(+). With respect to regulation, glycosylation does not appear to be required for enzymatic activity. Catalyzes the hydrolysis of nucleoside triphosphates and diphosphates in a calcium- or magnesium-dependent manner. Has a strong preference for nucleoside diphosphates, preferentially hydrolyzes GDP, IDP, and UDP, with slower hydrolysis of CDP, ITP, GTP, CTP, ADP, and UTP and virtually no hydrolysis of ATP. The membrane bound form might support glycosylation reactions in the Golgi apparatus and, when released from cells, might catalyze the hydrolysis of extracellular nucleotides. This chain is Ectonucleoside triphosphate diphosphohydrolase 6 (ENTPD6), found in Homo sapiens (Human).